We begin with the raw amino-acid sequence, 93 residues long: uncharacterized protein (93 aa).

A run of 3 helical transmembrane segments spans residues Ile9–Ile29, Ile40–Ile60, and Pro66–Ile86.

It localises to the cell membrane. This is an uncharacterized protein from Methanocaldococcus jannaschii (strain ATCC 43067 / DSM 2661 / JAL-1 / JCM 10045 / NBRC 100440) (Methanococcus jannaschii).